The sequence spans 529 residues: Bifunctional purine biosynthesis protein PurH (529 aa).

An MGS-like domain is found at 1–148; the sequence is MQQRRPVRRA…KNHKDVAIVV (148 aa).

This sequence belongs to the PurH family.

It carries out the reaction (6R)-10-formyltetrahydrofolate + 5-amino-1-(5-phospho-beta-D-ribosyl)imidazole-4-carboxamide = 5-formamido-1-(5-phospho-D-ribosyl)imidazole-4-carboxamide + (6S)-5,6,7,8-tetrahydrofolate. The enzyme catalyses IMP + H2O = 5-formamido-1-(5-phospho-D-ribosyl)imidazole-4-carboxamide. The protein operates within purine metabolism; IMP biosynthesis via de novo pathway; 5-formamido-1-(5-phospho-D-ribosyl)imidazole-4-carboxamide from 5-amino-1-(5-phospho-D-ribosyl)imidazole-4-carboxamide (10-formyl THF route): step 1/1. It participates in purine metabolism; IMP biosynthesis via de novo pathway; IMP from 5-formamido-1-(5-phospho-D-ribosyl)imidazole-4-carboxamide: step 1/1. The sequence is that of Bifunctional purine biosynthesis protein PurH from Klebsiella pneumoniae subsp. pneumoniae (strain ATCC 700721 / MGH 78578).